The chain runs to 277 residues: (-)-trans-carveol dehydrogenase (277 aa).

Position 10-32 (10-32 (LITGAARGQGRSHAIKLAEEGAD)) interacts with NAD(+). Residue serine 156 coordinates substrate. Tyrosine 169 functions as the Proton acceptor in the catalytic mechanism.

It belongs to the short-chain dehydrogenases/reductases (SDR) family. As to quaternary structure, homotetramer.

It catalyses the reaction (1S,5R)-carveol + NAD(+) = (R)-carvone + NADH + H(+). The enzyme catalyses (1S,5S)-carveol + NAD(+) = (S)-carvone + NADH + H(+). The protein operates within terpene metabolism; limonene degradation. Competitively inhibited by the product (S)- or (R)-carvone. Its function is as follows. Catalyzes the oxidation of carveol to carvone, with a strong stereoselectivity since it efficiently converts only the (6S)-stereoisomers, of which (-)-(4R,6S)-trans-carveol is the better substrate. Displays a broad substrate specificity with a preference for substituted cyclohexanols, and does not catalyze the oxidation of primary or short chain aliphatic secondary alcohols. Is also able, albeit more slowly, to oxidize limonene-1,2-diol into 1-hydroxy-2-oxolimonene. The chain is (-)-trans-carveol dehydrogenase (limC) from Rhodococcus erythropolis (Arthrobacter picolinophilus).